Consider the following 998-residue polypeptide: Calcium-transporting ATPase 3, endoplasmic reticulum-type (998 aa).

The Cytoplasmic segment spans residues 1–48 (MEDAYARSVSEVLDFFGVDPTKGLSDSQVVHHSRLYGRNVLPEEKRTP). A helical transmembrane segment spans residues 49–69 (FWKLVLKQFDDLLVKILIVAA). The Lumenal segment spans residues 70 to 89 (IVSFVLALANGETGLTAFLE). Residues 90–109 (PFVILLILAANAAVGVITET) traverse the membrane as a helical segment. At 110 to 250 (NAEKALEELR…DEATPLKKKL (141 aa)) the chain is on the cytoplasmic side. A helical membrane pass occupies residues 251-270 (DEFGSFLAKVIAGICVLVWV). At 271-291 (VNIGHFSDPSHGGFFKGAIHY) the chain is on the lumenal side. A helical membrane pass occupies residues 292-309 (FKIAVALAVAAIPEGLPA). The Ca(2+) site is built by Val300, Ala301, Ile303, and Glu305. At 310–746 (VVTTCLALGT…AEGRAIYNNT (437 aa)) the chain is on the cytoplasmic side. Asp347 serves as the catalytic 4-aspartylphosphate intermediate. Mg(2+) is bound by residues Asp692 and Asp696. A helical membrane pass occupies residues 747–766 (KQFIRYMISSNIGEVVCIFV). Ca(2+)-binding residues include Asn757 and Glu760. Over 767 to 776 (AAVLGIPDTL) the chain is Lumenal. Residues 777–797 (APVQLLWVNLVTDGLPATAIG) traverse the membrane as a helical segment. Ca(2+)-binding residues include Asn785, Thr788, and Asp789. The Cytoplasmic segment spans residues 798 to 817 (FNKQDSDVMKAKPRKVGEAV). The chain crosses the membrane as a helical span at residues 818 to 840 (VTGWLFFRYLVIGVYVGLATVAG). Residues 841-883 (FIWWFVYSDGGPKLTYSELMNFETCALRETTYPCSIFEDRHPS) lie on the Lumenal side of the membrane. The helical transmembrane segment at 884 to 903 (TVAMTVLVVVEMFNALNNLS) threads the bilayer. Glu894 provides a ligand contact to Ca(2+). At 904-916 (ENQSLLVITPRSN) the chain is on the cytoplasmic side. The chain crosses the membrane as a helical span at residues 917–935 (LWLVGSIILTMLLHVLILY). Residues 936–950 (VHPLAVLFSVTPLSW) are Lumenal-facing. Residues 951–971 (AEWTAVLYLSFPVIIIDELLK) form a helical membrane-spanning segment. Residues 972–998 (FLSRNTGMRFRFRLRKADLLPKDRRDK) lie on the Cytoplasmic side of the membrane.

It belongs to the cation transport ATPase (P-type) (TC 3.A.3) family. Type IIA subfamily. As to expression, expressed in root cap, in elongation and differentiation zones of roots, in vascular tissues of roots, leaves, floral pedicels and style, in leaves, including hydathodes and guard cells, in stamens, in petals, in sepals and in siliques.

Its subcellular location is the golgi apparatus membrane. The protein localises to the endosome membrane. The protein resides in the prevacuolar compartment membrane. The catalysed reaction is Ca(2+)(in) + ATP + H2O = Ca(2+)(out) + ADP + phosphate + H(+). Its function is as follows. This magnesium-dependent enzyme catalyzes the hydrolysis of ATP coupled with the translocation of calcium from the cytosol to an endomembrane compartment. Involved in calcium-enhanced root growth, in tolerance to toxic levels of manganese and in secretory processes. Has a crucial role in manganese nutrition, but is not involved in transporting copper, iron or zinc. In Arabidopsis thaliana (Mouse-ear cress), this protein is Calcium-transporting ATPase 3, endoplasmic reticulum-type.